The chain runs to 448 residues: Protein king tubby (448 aa).

The interval histidine 103–aspartate 195 is disordered. Low complexity predominate over residues glutamine 118 to glutamine 133. Residue serine 141 is modified to Phosphoserine. Residues asparagine 182–glutamate 191 show a composition bias toward gly residues.

Belongs to the TUB family.

It localises to the cytoplasm. The protein localises to the nucleus. The protein resides in the cell projection. It is found in the cilium membrane. Its subcellular location is the rhabdomere. The sequence is that of Protein king tubby from Drosophila erecta (Fruit fly).